A 371-amino-acid polypeptide reads, in one-letter code: tRNA-specific 2-thiouridylase MnmA (371 aa).

Residues 16-23 (GMSGGVDS) and Met-42 each bind ATP. The interval 102–104 (NPD) is interaction with target base in tRNA. Catalysis depends on Cys-107, which acts as the Nucleophile. Cys-107 and Cys-204 are joined by a disulfide. Gly-132 contacts ATP. The interaction with tRNA stretch occupies residues 154-156 (KDQ). Cys-204 functions as the Cysteine persulfide intermediate in the catalytic mechanism. Residues 316–317 (RY) form an interaction with tRNA region.

It belongs to the MnmA/TRMU family.

Its subcellular location is the cytoplasm. It catalyses the reaction S-sulfanyl-L-cysteinyl-[protein] + uridine(34) in tRNA + AH2 + ATP = 2-thiouridine(34) in tRNA + L-cysteinyl-[protein] + A + AMP + diphosphate + H(+). Functionally, catalyzes the 2-thiolation of uridine at the wobble position (U34) of tRNA, leading to the formation of s(2)U34. In Shewanella pealeana (strain ATCC 700345 / ANG-SQ1), this protein is tRNA-specific 2-thiouridylase MnmA.